Consider the following 300-residue polypeptide: Bifunctional protein FolD 2 (300 aa).

NADP(+) contacts are provided by residues 165–167 (GRS), S190, and I231.

It belongs to the tetrahydrofolate dehydrogenase/cyclohydrolase family. As to quaternary structure, homodimer.

It catalyses the reaction (6R)-5,10-methylene-5,6,7,8-tetrahydrofolate + NADP(+) = (6R)-5,10-methenyltetrahydrofolate + NADPH. The catalysed reaction is (6R)-5,10-methenyltetrahydrofolate + H2O = (6R)-10-formyltetrahydrofolate + H(+). It participates in one-carbon metabolism; tetrahydrofolate interconversion. Its function is as follows. Catalyzes the oxidation of 5,10-methylenetetrahydrofolate to 5,10-methenyltetrahydrofolate and then the hydrolysis of 5,10-methenyltetrahydrofolate to 10-formyltetrahydrofolate. The chain is Bifunctional protein FolD 2 from Pseudomonas syringae pv. tomato (strain ATCC BAA-871 / DC3000).